A 600-amino-acid polypeptide reads, in one-letter code: DNA polymerase alpha subunit B (600 aa).

Positions 107–165 are disordered; it reads ETLLSSYTTPSKGPLKRVSSTPETPLTKRSVAARSPRQLLSPSSFSPSATPSQKYTSRT. Position 126 is a phosphoserine (Ser-126). 2 positions are modified to phosphothreonine: Thr-127 and Thr-130. The segment covering 139-159 has biased composition (low complexity); the sequence is ARSPRQLLSPSSFSPSATPSQ. Phosphoserine occurs at positions 141, 147, 152, and 154.

The protein belongs to the DNA polymerase alpha subunit B family. In terms of assembly, component of the alpha DNA polymerase complex (also known as the alpha DNA polymerase-primase complex) consisting of four subunits: the catalytic subunit POLA1, the regulatory subunit POLA2, and the primase complex subunits PRIM1 and PRIM2 respectively. Within the complex, POLA1 directly interacts with PRIM2. Post-translationally, phosphorylated in a cell cycle-dependent manner, in G2/M phase.

It localises to the nucleus. Accessory subunit of the DNA polymerase alpha complex (also known as the alpha DNA polymerase-primase complex) which plays an essential role in the initiation of DNA synthesis. During the S phase of the cell cycle, the DNA polymerase alpha complex (composed of a catalytic subunit POLA1, an accessory subunit POLA2 and two primase subunits, the catalytic subunit PRIM1 and the regulatory subunit PRIM2) is recruited to DNA at the replicative forks via direct interactions with MCM10 and WDHD1. The primase subunit of the polymerase alpha complex initiates DNA synthesis by oligomerising short RNA primers on both leading and lagging strands. These primers are initially extended by the polymerase alpha catalytic subunit and subsequently transferred to polymerase delta and polymerase epsilon for processive synthesis on the lagging and leading strand, respectively. The polypeptide is DNA polymerase alpha subunit B (Pola2) (Mus musculus (Mouse)).